The primary structure comprises 1040 residues: MLEDISEEDIWEYKSKRKPKRVDPNNGSKNILKSVEKATDGKYQSKRSRNRKRAAEAKEVKDHEVPLGNAGCQTSVASSQNSSCGDGIQQTQDKETTPGKLCRTQKSQHVSPKIRPVYDGYCPNCQMPFSSLIGQTPRWHVFECLDSPPRSETECPDGLLCTSTIPFHYKRYTHFLLAQSRAGDHPFSSPSPASGGSFSETKSGVLCSLEERWSSYQNQTDNSVSNDPLLMTQYFKKSPSLTEASEKISTHIQTSQQALQFTDFVENDKLVGVALRLANNSEHINLPLPENDFSDCEISYSPLQSDEDTHDIDEKPDDSQEQLFFTESSKDGSLEEDDDSCGFFKKRHGPLLKDQDESCPKVNSFLTRDKYDEGLYRFNSLNDLSQPISQNNESTLPYDLACTGGDFVLFPPALAGKLAASVHQATKAKPDEPEFHSAQSNKQKQVIEESSVYNQVSLPLVKSLMLKPFESQVEGYLSSQPTQNTIRKLSSENLNAKNNTNSACFCRKALEGVPVGKATILNTENLSSTPAPKYLKILPSGLKYNARHPSTKVMKQMDIGVYFGLPPKRKEEKLLGESALEGINLNPVPSPNQKRSSQCKRKAEKSLSDLEFDASTLHESQLSVELSSERSQRQKKRCRKSNSLQEGACQKRSDHLINTESEAVNLSKVKVFTKSAHGGLQRGNKKIPESSNVGGSRKKTCPFYKKIPGTGFTVDAFQYGVVEGCTAYFLTHFHSDHYAGLSKHFTFPVYCSEITGNLLKNKLHVQEQYIHPLPLDTECIVNGVKVVLLDANHCPGAVMILFYLPNGTVILHTGDFRADPSMERSLLADQKVHMLYLDTTYCSPEYTFPSQQEVIRFAINTAFEAVTLNPHALVVCGTYSIGKEKVFLAIADVLGSKVGMSQEKYKTLQCLNIPEINSLITTDMCSSLVHLLPMMQINFKGLQSHLKKCGGKYNQILAFRPTGWTHSNKFTRIADVIPQTKGNISIYGIPYSEHSSYLEMKRFVQWLKPQKIIPTVNVGTWKSRSTMEKYFREWKLEAGY.

The tract at residues Met1 to Pro190 is nuclear localization region. The interval Ser15–Val76 is disordered. The span at Arg53–Val65 shows a compositional bias: basic and acidic residues. A UBZ4-type zinc finger spans residues Asp119 to Pro149. Positions 122, 125, 140, and 144 each coordinate Zn(2+). Residues Lys202, Lys236, Lys269, Lys353, Lys361, Lys429, Lys488, Lys508, Lys517, Lys533, and Lys536 each participate in a glycyl lysine isopeptide (Lys-Gly) (interchain with G-Cter in SUMO2) cross-link. Residues Leu396–Ala614 are nuclear focus formation. Disordered stretches follow at residues Gly582 to Lys602 and Ser623 to Lys651. Residue Ser590 is modified to Phosphoserine. Glycyl lysine isopeptide (Lys-Gly) (interchain with G-Cter in SUMO2) cross-links involve residues Lys668, Lys670, and Lys674.

It belongs to the DNA repair metallo-beta-lactamase (DRMBL) family. Binds constitutively to TP53BP1. Binds CDC27, which is itself a component of the anaphase promoting complex (APC). Binds PIAS1. In terms of tissue distribution, expressed in brain, heart, kidney, liver, pancreas, placenta and skeletal muscle.

Its subcellular location is the nucleus. The catalysed reaction is a beta-lactam + H2O = a substituted beta-amino acid. Beta-lactamase activity is inhibited by sulbactam. Functionally, may be required for DNA interstrand cross-link repair. Also required for checkpoint mediated cell cycle arrest in early prophase in response to mitotic spindle poisons. Possesses beta-lactamase activity, catalyzing the hydrolysis of penicillin G and nitrocefin. Exhibits no activity towards other beta-lactam antibiotic classes including cephalosporins (cefotaxime) and carbapenems (imipenem). This Homo sapiens (Human) protein is DNA cross-link repair 1A protein (DCLRE1A).